We begin with the raw amino-acid sequence, 860 residues long: Nucleolar MIF4G domain-containing protein 1 (860 aa).

Disordered stretches follow at residues 1–172 (MAAS…AARK), 191–211 (RCLG…PLSF), and 226–339 (GKNS…EKYI). The segment at 1–269 (MAASRSAGEA…EEEEEGDVEK (269 aa)) is necessary for nucleolar localization and for targeting PPP1CA to the nucleolus. Positions 20–31 (VRMKRRGGRGPR) are enriched in basic residues. S57 carries the post-translational modification Phosphoserine. Residues 77–99 (GGRKSRKELRKEKRHLRKARRLQ) show a composition bias toward basic residues. Residues 115–131 (GAEEASGHRQDTEERAR) show a composition bias toward basic and acidic residues. Phosphoserine is present on S139. Positions 142-151 (RKPRPSRVKA) are enriched in basic residues. Over residues 152-169 (KATAATAKTRPSAAATAA) the composition is skewed to low complexity. Composition is skewed to acidic residues over residues 249-267 (SDLE…EGDV) and 278-293 (AQSE…EQGE). The short motif at 307–310 (RVRF) is the Required for efficient binding to PPP1CA and for targeting PPP1CA to the nucleolus element. Positions 312–325 (EDEEKSENSSEDGD) are enriched in acidic residues. A phosphoserine mark is found at S317, S320, and S321. The region spanning 362–559 (KKHVKGLLNR…ETMLALKNND (198 aa)) is the MIF4G domain. The region spanning 654–770 (DIRRNIFCTI…SLSILKVVEF (117 aa)) is the MI domain.

It belongs to the CWC22 family. In terms of assembly, may interact with EIF4A1, EIF4A2 and EIF4A3. Interacts with PPP1CA and PPP1CC. In terms of tissue distribution, expressed in heart and skeletal muscle.

The protein localises to the nucleus. Its subcellular location is the nucleolus. In terms of biological role, plays a role in targeting PPP1CA to the nucleolus. The chain is Nucleolar MIF4G domain-containing protein 1 (NOM1) from Homo sapiens (Human).